Here is a 1114-residue protein sequence, read N- to C-terminus: OTU domain-containing protein 4 (1114 aa).

Met1 is modified (N-acetylmethionine). The tract at residues 1–22 is disordered; that stretch reads MEAAVGVPDGGDQGGAGPREDA. The segment covering 8–17 has biased composition (gly residues); that stretch reads PDGGDQGGAG. Positions 34–155 constitute an OTU domain; sequence LYRKLVAKDG…GNHYDIVYPI (122 aa). The segment at 39-45 is cys-loop; sequence VAKDGSC. Asp42 is a catalytic residue. Cys45 functions as the Nucleophile in the catalytic mechanism. A variable-loop region spans residues 94–104; the sequence is LENPQEWVGQV. Tyr120 is modified (phosphotyrosine). Phosphoserine is present on residues Ser126 and Ser128. A Phosphothreonine modification is found at Thr131. The his-loop stretch occupies residues 143-148; the sequence is FSNGNH. His148 is an active-site residue. A phosphoserine mark is found at Ser166, Ser199, Ser202, Ser204, and Ser341. Positions 323–449 are disordered; that stretch reads KHTSKNLKAP…FGLSPEERRE (127 aa). Low complexity predominate over residues 392 to 404; sequence FSSHSSGSQSQKF. Over residues 420-435 the composition is skewed to basic and acidic residues; sequence RKPDRERVEDFDHTSR. Tyr439 carries the phosphotyrosine modification. Ser443 is subject to Phosphoserine. Tyr460 carries the phosphotyrosine modification. Positions 472-567 are disordered; sequence ALSSSSVNQS…PAEQKPAEHV (96 aa). Over residues 474–487 the composition is skewed to low complexity; sequence SSSSVNQSASQSSN. Residues 496–529 are compositionally biased toward basic and acidic residues; that stretch reads HVGDRKGSRRRMDTEERKDKDSIHGHSQLDKRPE. 3 positions are modified to phosphoserine: Ser546, Ser893, and Ser900. The tract at residues 911–1114 is disordered; that stretch reads EFPEARGEHV…MGDGHRGQHT (204 aa). Composition is skewed to basic and acidic residues over residues 913–922 and 969–1000; these read PEARGEHVHS and NRER…DPKT. Phosphoserine occurs at positions 1006, 1011, 1014, 1023, and 1024. Residues 1039 to 1048 are compositionally biased toward polar residues; that stretch reads SKQFYNQTYG. A Phosphoserine modification is found at Ser1049. 2 stretches are compositionally biased toward basic and acidic residues: residues 1067-1086 and 1096-1114; these read VRSE…EGYQ and FRGD…GQHT.

In terms of assembly, interacts with MYD88; the interaction is direct. Interacts with ALKBH3; the interaction is direct. Interacts with USP7; the interaction is direct. Interacts with USP9X; the interaction is direct. In terms of processing, phosphorylated on Ser-202 and Ser-204 likely by CSNK2A1-CSNK2A2 serine/threonine-protein kinase complex. Activates 'Lys-63'-specific deubiquitinase activity.

The protein resides in the cytoplasm. It is found in the nucleus. It catalyses the reaction Thiol-dependent hydrolysis of ester, thioester, amide, peptide and isopeptide bonds formed by the C-terminal Gly of ubiquitin (a 76-residue protein attached to proteins as an intracellular targeting signal).. With respect to regulation, phosphorylation on Ser-202 and Ser-204 induces 'Lys-63'-specific deubiquitinase activity. Deubiquitinase which hydrolyzes the isopeptide bond between the ubiquitin C-terminus and the lysine epsilon-amino group of the target protein. May negatively regulate inflammatory and pathogen recognition signaling in innate immune response. Upon phosphorylation at Ser-202 and Ser-204 residues, via IL-1 receptor and Toll-like receptor signaling pathway, specifically deubiquitinates 'Lys-63'-polyubiquitinated MYD88 adapter protein triggering down-regulation of NF-kappa-B-dependent transcription of inflammatory mediators. Independently of the catalytic activity, acts as a scaffold for alternative deubiquitinases to assemble specific deubiquitinase-substrate complexes. Associates with USP7 and USP9X deubiquitinases to stabilize alkylation repair enzyme ALKBH3, thereby promoting the repair of alkylated DNA lesions. The sequence is that of OTU domain-containing protein 4 from Homo sapiens (Human).